The chain runs to 679 residues: Glycine--tRNA ligase beta subunit (679 aa).

This sequence belongs to the class-II aminoacyl-tRNA synthetase family. In terms of assembly, tetramer of two alpha and two beta subunits.

The protein localises to the cytoplasm. The enzyme catalyses tRNA(Gly) + glycine + ATP = glycyl-tRNA(Gly) + AMP + diphosphate. The polypeptide is Glycine--tRNA ligase beta subunit (Streptococcus pyogenes serotype M1).